A 532-amino-acid polypeptide reads, in one-letter code: Pyruvate kinase (532 aa).

Arginine 63 contacts substrate. K(+) contacts are provided by asparagine 65, serine 67, aspartate 99, and threonine 100. 65–68 (NFSH) is a binding site for ATP. ATP contacts are provided by arginine 106 and lysine 191. Glutamate 256 contributes to the Mg(2+) binding site. Residues glycine 279, aspartate 280, and threonine 312 each contribute to the substrate site. Aspartate 280 serves as a coordination point for Mg(2+).

This sequence belongs to the pyruvate kinase family. Homotetramer. It depends on Mg(2+) as a cofactor. K(+) is required as a cofactor.

The enzyme catalyses pyruvate + ATP = phosphoenolpyruvate + ADP + H(+). It participates in carbohydrate degradation; glycolysis; pyruvate from D-glyceraldehyde 3-phosphate: step 5/5. This chain is Pyruvate kinase (pkiA), found in Agaricus bisporus (White button mushroom).